A 449-amino-acid polypeptide reads, in one-letter code: Deoxyguanosinetriphosphate triphosphohydrolase-like protein (449 aa).

The tract at residues 1–27 (MTSSVWQERRHGEDKQRRNDHRSPYQR) is disordered. Positions 7-27 (QERRHGEDKQRRNDHRSPYQR) are enriched in basic and acidic residues. Residues 59–255 (RLTHSLEVSQ…MELADDIAYA (197 aa)) enclose the HD domain.

The protein belongs to the dGTPase family. Type 2 subfamily.

This chain is Deoxyguanosinetriphosphate triphosphohydrolase-like protein, found in Shewanella baltica (strain OS195).